The chain runs to 716 residues: Leucine-rich repeat neuronal protein 1 (716 aa).

Residues 1 to 25 (MARMSFVLAAYQMVLSLLMTSLTGS) form the signal peptide. The region spanning 26-72 (SLQSSECPQLCVCEIRPWFTPQSTYREATTVDCNDLRLTRIPSNLSS) is the LRRNT domain. Topologically, residues 26–631 (SLQSSECPQL…DISDQETSTA (606 aa)) are extracellular. N69 carries an N-linked (GlcNAc...) asparagine glycan. 9 LRR repeats span residues 73-95 (DTQV…QQLF), 96-117 (NLTE…GLAN), 120-141 (QLTT…CLQD), 144-165 (NLQE…AFSG), 168-189 (NLLR…WFDS), 192-213 (NLEI…NFKP), 216-237 (NLRS…ALVG), 240-261 (SLES…ALQK), and 264-285 (NLKF…DFKN). Residues N96, N106, and N117 are each glycosylated (N-linked (GlcNAc...) asparagine). Positions 371-424 (NPLRCDCVIHWINSNKTNIRFMEPLSMFCAMPPEYRGQQVKEVLIQDSSEQCLP) constitute an LRRCT domain. N-linked (GlcNAc...) asparagine glycosylation is present at N385. The 92-residue stretch at 424–515 (PMISHDTFPN…GADTRVVMIK (92 aa)) folds into the Ig-like C2-type domain. Residues C447 and C499 are joined by a disulfide bond. N-linked (GlcNAc...) asparagine glycans are attached at residues N517, N582, and N611. A Fibronectin type-III domain is found at 525 to 617 (QVLKIYVKQT…SCVNVTTKNA (93 aa)). The helical transmembrane segment at 632–652 (LAAVMGSMFAVISLASIAVYI) threads the bilayer. Residues 653–716 (AKRFKRKNYH…VDTSRSYYMW (64 aa)) lie on the Cytoplasmic side of the membrane. The segment covering 691-700 (DSEKDKDGTA) has biased composition (basic and acidic residues). A disordered region spans residues 691–716 (DSEKDKDGTADTKPTQVDTSRSYYMW). The segment covering 702-716 (TKPTQVDTSRSYYMW) has biased composition (polar residues).

The protein resides in the membrane. This chain is Leucine-rich repeat neuronal protein 1 (LRRN1), found in Bos taurus (Bovine).